The sequence spans 670 residues: Leiomodin-3 (670 aa).

4 disordered regions span residues 34–72, 94–120, 139–165, and 202–274; these read EMDD…EEID, EIAP…GSFD, EEER…EDKV, and EDKV…NWVP. 5 stretches are compositionally biased toward basic and acidic residues: residues 40-63, 97-112, 153-163, 205-214, and 249-261; these read PDER…RDCT, PDER…DQTD, TNEEHEAKNED, VCDKPVKTDL, and TETK…KEDS. A coiled-coil region spans residues 150 to 183; it reads SQKTNEEHEAKNEDKVEELELVYEEIVEEVEGGQ. The stretch at 464-494 forms a coiled coil; that stretch reads DRQRQQRMEEQKLQQMKEQRKVMEMYEDSLN. Residues 517–556 form a disordered region; the sequence is NGAEDIPEDSPEPSPQPSPPHQLCKTQHLAPQQHPPNLST. A WH2 domain is found at 637 to 656; that stretch reads PRDHLLSEIRQSNVAYLKAV.

It belongs to the tropomodulin family. In terms of tissue distribution, expressed in muscle (at protein level).

The protein localises to the cytoplasm. It localises to the myofibril. Its subcellular location is the sarcomere. The protein resides in the a band. It is found in the m line. The protein localises to the cytoskeleton. Functionally, essential for the organization of sarcomeric thin filaments in skeletal muscle. In Danio rerio (Zebrafish), this protein is Leiomodin-3.